Reading from the N-terminus, the 906-residue chain is Protein translocase subunit SecA (906 aa).

ATP is bound by residues Q89, 107 to 111 (GEGKT), and D502. The Zn(2+) site is built by C885, C887, C896, and H897.

The protein belongs to the SecA family. In terms of assembly, monomer and homodimer. Part of the essential Sec protein translocation apparatus which comprises SecA, SecYEG and auxiliary proteins SecDF-YajC and YidC. The cofactor is Zn(2+).

The protein resides in the cell inner membrane. The protein localises to the cytoplasm. It carries out the reaction ATP + H2O + cellular proteinSide 1 = ADP + phosphate + cellular proteinSide 2.. In terms of biological role, part of the Sec protein translocase complex. Interacts with the SecYEG preprotein conducting channel. Has a central role in coupling the hydrolysis of ATP to the transfer of proteins into and across the cell membrane, serving both as a receptor for the preprotein-SecB complex and as an ATP-driven molecular motor driving the stepwise translocation of polypeptide chains across the membrane. The sequence is that of Protein translocase subunit SecA from Rhizobium rhizogenes (strain K84 / ATCC BAA-868) (Agrobacterium radiobacter).